The primary structure comprises 232 residues: N-(5'-phosphoribosyl)anthranilate isomerase (232 aa).

Belongs to the TrpF family.

It catalyses the reaction N-(5-phospho-beta-D-ribosyl)anthranilate = 1-(2-carboxyphenylamino)-1-deoxy-D-ribulose 5-phosphate. It participates in amino-acid biosynthesis; L-tryptophan biosynthesis; L-tryptophan from chorismate: step 3/5. The sequence is that of N-(5'-phosphoribosyl)anthranilate isomerase (TRP1) from Wickerhamomyces anomalus (Yeast).